The following is a 67-amino-acid chain: Phycobilisome 7.8 kDa linker polypeptide, allophycocyanin-associated, core (67 aa).

One can recognise a CpcD-like domain in the interval 1-56 (MRMFKITACVPSQTRIRTQRELQNTYFTKLVPYENWFREQQRIQKMGGKIVKVELF).

The protein belongs to the phycobilisome linker protein family.

It localises to the cellular thylakoid membrane. Functionally, rod linker protein, associated with allophycocyanin. Linker polypeptides determine the state of aggregation and the location of the disk-shaped phycobiliprotein units within the phycobilisome and modulate their spectroscopic properties in order to mediate a directed and optimal energy transfer. The protein is Phycobilisome 7.8 kDa linker polypeptide, allophycocyanin-associated, core (apcC) of Thermosynechococcus vestitus (strain NIES-2133 / IAM M-273 / BP-1).